Here is a 230-residue protein sequence, read N- to C-terminus: 2,3-bisphosphoglycerate-dependent phosphoglycerate mutase (230 aa).

Substrate contacts are provided by residues 8 to 15 (RHGESEWN), 21 to 22 (TG), R60, 87 to 90 (ERHY), K98, 114 to 115 (RR), and 183 to 184 (GN). The Tele-phosphohistidine intermediate role is filled by H9. The active-site Proton donor/acceptor is E87.

Belongs to the phosphoglycerate mutase family. BPG-dependent PGAM subfamily.

The enzyme catalyses (2R)-2-phosphoglycerate = (2R)-3-phosphoglycerate. The protein operates within carbohydrate degradation; glycolysis; pyruvate from D-glyceraldehyde 3-phosphate: step 3/5. In terms of biological role, catalyzes the interconversion of 2-phosphoglycerate and 3-phosphoglycerate. This Streptococcus agalactiae serotype Ia (strain ATCC 27591 / A909 / CDC SS700) protein is 2,3-bisphosphoglycerate-dependent phosphoglycerate mutase.